The sequence spans 368 residues: Probable endopolygalacturonase A (368 aa).

An N-terminal signal peptide occupies residues methionine 1–alanine 18. The propeptide occupies alanine 19–arginine 31. Residues cysteine 35 and cysteine 50 are joined by a disulfide bond. 7 PbH1 repeats span residues leucine 140–alanine 162, leucine 167–glutamate 192, serine 193–serine 214, glycine 215–serine 235, valine 244–threonine 265, valine 273–glutamine 295, and threonine 307–glycine 352. Aspartate 207 acts as the Proton donor in catalysis. Cysteine 209 and cysteine 225 are joined by a disulfide. Histidine 229 is an active-site residue. Asparagine 246 carries N-linked (GlcNAc...) asparagine glycosylation. 2 disulfides stabilise this stretch: cysteine 335–cysteine 340 and cysteine 359–cysteine 368.

The protein belongs to the glycosyl hydrolase 28 family.

The protein localises to the secreted. It carries out the reaction (1,4-alpha-D-galacturonosyl)n+m + H2O = (1,4-alpha-D-galacturonosyl)n + (1,4-alpha-D-galacturonosyl)m.. Functionally, involved in maceration and soft-rotting of plant tissue. Hydrolyzes the 1,4-alpha glycosidic bonds of de-esterified pectate in the smooth region of the plant cell wall. The polypeptide is Probable endopolygalacturonase A (pgaA) (Aspergillus fumigatus (strain CBS 144.89 / FGSC A1163 / CEA10) (Neosartorya fumigata)).